The following is a 202-amino-acid chain: Pyridoxal 5'-phosphate synthase subunit PdxT (202 aa).

50–52 (GES) is an L-glutamine binding site. C82 (nucleophile) is an active-site residue. L-glutamine is bound by residues R111 and 140–141 (IR). Residues H176 and E178 each act as charge relay system in the active site.

The protein belongs to the glutaminase PdxT/SNO family. In the presence of PdxS, forms a dodecamer of heterodimers. Only shows activity in the heterodimer.

The catalysed reaction is aldehydo-D-ribose 5-phosphate + D-glyceraldehyde 3-phosphate + L-glutamine = pyridoxal 5'-phosphate + L-glutamate + phosphate + 3 H2O + H(+). It catalyses the reaction L-glutamine + H2O = L-glutamate + NH4(+). Its pathway is cofactor biosynthesis; pyridoxal 5'-phosphate biosynthesis. Its function is as follows. Catalyzes the hydrolysis of glutamine to glutamate and ammonia as part of the biosynthesis of pyridoxal 5'-phosphate. The resulting ammonia molecule is channeled to the active site of PdxS. In Streptomyces coelicolor (strain ATCC BAA-471 / A3(2) / M145), this protein is Pyridoxal 5'-phosphate synthase subunit PdxT.